Consider the following 112-residue polypeptide: MENRFEISMLIDYYGTLLTEKQFNVMTLYYNEDLSLAEIAEINKTSRQAIYDLIKRCSKQLHSYDEKLKLSKKVDKRYRIKEELMAELNKNSNLDENIKKYIDEKLEEIINA.

The protein belongs to the UPF0122 family.

Its function is as follows. Might take part in the signal recognition particle (SRP) pathway. This is inferred from the conservation of its genetic proximity to ftsY/ffh. May be a regulatory protein. The protein is UPF0122 protein CPE1714 of Clostridium perfringens (strain 13 / Type A).